A 425-amino-acid chain; its full sequence is Enolase (425 aa).

Glutamine 164 provides a ligand contact to (2R)-2-phosphoglycerate. Residue glutamate 208 is the Proton donor of the active site. Mg(2+) is bound by residues aspartate 243, glutamate 286, and aspartate 312. The (2R)-2-phosphoglycerate site is built by lysine 337, arginine 366, serine 367, and lysine 388. Lysine 337 serves as the catalytic Proton acceptor.

This sequence belongs to the enolase family. It depends on Mg(2+) as a cofactor.

The protein localises to the cytoplasm. It is found in the secreted. Its subcellular location is the cell surface. It carries out the reaction (2R)-2-phosphoglycerate = phosphoenolpyruvate + H2O. The protein operates within carbohydrate degradation; glycolysis; pyruvate from D-glyceraldehyde 3-phosphate: step 4/5. Its function is as follows. Catalyzes the reversible conversion of 2-phosphoglycerate (2-PG) into phosphoenolpyruvate (PEP). It is essential for the degradation of carbohydrates via glycolysis. This Methanococcus aeolicus (strain ATCC BAA-1280 / DSM 17508 / OCM 812 / Nankai-3) protein is Enolase.